A 542-amino-acid chain; its full sequence is Global nitrogen regulator NrpR (542 aa).

Positions 12–77 (IEILDILSKS…VITERGLEEL (66 aa)) are winged helix-turn-helix. NRD stretches follow at residues 85–320 (RLGS…KANI) and 321–542 (RIKT…YKEI).

This sequence belongs to the NrpR family. As to quaternary structure, homodimer.

With respect to regulation, under nitrogen limitation, binding of the intracellular nitrogen metabolite 2-oxoglutarate to NrpR decreases the binding affinity of NrpR to DNA, leading to initiation of transcription. In terms of biological role, transcriptional repressor of nitrogen fixation and assimilation genes. Binds to two tandem operators in the glnA and nif promoters, thereby blocking transcription of the genes. The chain is Global nitrogen regulator NrpR from Methanocaldococcus jannaschii (strain ATCC 43067 / DSM 2661 / JAL-1 / JCM 10045 / NBRC 100440) (Methanococcus jannaschii).